A 273-amino-acid polypeptide reads, in one-letter code: Putative deoxyribonuclease TATDN1 homolog (273 aa).

A divalent metal cation-binding residues include Glu-91, His-125, His-147, and Asp-195.

This sequence belongs to the metallo-dependent hydrolases superfamily. TatD-type hydrolase family. A divalent metal cation serves as cofactor.

The protein localises to the nucleus. Functionally, putative deoxyribonuclease. In Encephalitozoon cuniculi (strain GB-M1) (Microsporidian parasite), this protein is Putative deoxyribonuclease TATDN1 homolog.